Here is a 352-residue protein sequence, read N- to C-terminus: 26S proteasome regulatory subunit rpn-8 (352 aa).

Positions 16 to 152 constitute an MPN domain; the sequence is VSVAPLVLLS…TDAYFAVDEI (137 aa). Residues 303–352 are disordered; sequence NRQQQEENDAKKKEGENGEKKEGADKKEGSPAAANGESKEKENSPKEKKK. 2 stretches are compositionally biased toward basic and acidic residues: residues 306 to 331 and 339 to 352; these read QQEE…KKEG and ESKE…EKKK.

This sequence belongs to the peptidase M67A family.

In terms of biological role, acts as a regulatory subunit of the 26S proteasome which is involved in the ATP-dependent degradation of ubiquitinated proteins. The sequence is that of 26S proteasome regulatory subunit rpn-8 (rpn-8) from Neurospora crassa (strain ATCC 24698 / 74-OR23-1A / CBS 708.71 / DSM 1257 / FGSC 987).